We begin with the raw amino-acid sequence, 522 residues long: Probable cytochrome P450 12e1, mitochondrial (522 aa).

Position 468 (Cys468) interacts with heme.

This sequence belongs to the cytochrome P450 family. Requires heme as cofactor.

The protein resides in the mitochondrion membrane. In Drosophila melanogaster (Fruit fly), this protein is Probable cytochrome P450 12e1, mitochondrial (Cyp12e1).